Consider the following 557-residue polypeptide: Urocanate hydratase (557 aa).

NAD(+)-binding positions include 53-54, Q131, 177-179, E197, R202, 243-244, 264-268, 274-275, and Y323; these read GG, GMG, NA, QTSAH, and YL. The active site involves C411. G493 serves as a coordination point for NAD(+).

This sequence belongs to the urocanase family. It depends on NAD(+) as a cofactor.

The protein localises to the cytoplasm. The catalysed reaction is 4-imidazolone-5-propanoate = trans-urocanate + H2O. It functions in the pathway amino-acid degradation; L-histidine degradation into L-glutamate; N-formimidoyl-L-glutamate from L-histidine: step 2/3. In terms of biological role, catalyzes the conversion of urocanate to 4-imidazolone-5-propionate. In Pseudomonas putida (strain ATCC 700007 / DSM 6899 / JCM 31910 / BCRC 17059 / LMG 24140 / F1), this protein is Urocanate hydratase.